The sequence spans 143 residues: Alpha-S2-casein-like B (143 aa).

The N-terminal stretch at 1–15 (MKFIILTCLLAVALA) is a signal peptide.

This sequence belongs to the alpha-casein family. As to expression, mammary gland specific. Secreted in milk.

The protein resides in the secreted. Its function is as follows. Important role in the capacity of milk to transport calcium phosphate. In Mus musculus (Mouse), this protein is Alpha-S2-casein-like B (Csn1s2b).